A 103-amino-acid chain; its full sequence is Histone H4.2 (103 aa).

A compositionally biased stretch (gly residues) spans 1-14 (MSGRGKGGKGLGKG). Positions 1 to 20 (MSGRGKGGKGLGKGGAKRHR) are disordered. N6-acetyl-N6-methyllysine; alternate is present on K6. 3 positions are modified to N6-methyllysine; alternate: K6, K9, and K13. K13 carries the post-translational modification N6-acetyl-N6-methyllysine; alternate. The DNA-binding element occupies 17-21 (KRHRK). Position 92 is an N6-glutaryllysine (K92).

It belongs to the histone H4 family. As to quaternary structure, the nucleosome is a histone octamer containing two molecules each of H2A, H2B, H3 and H4 assembled in one H3-H4 heterotetramer and two H2A-H2B heterodimers. The octamer wraps approximately 147 bp of DNA. Post-translationally, glutarylation at Lys-92 (H4K91glu) destabilizes nucleosomes by promoting dissociation of the H2A-H2B dimers from nucleosomes.

Its subcellular location is the nucleus. The protein resides in the chromosome. Core component of nucleosome. Nucleosomes wrap and compact DNA into chromatin, limiting DNA accessibility to the cellular machineries which require DNA as a template. Histones thereby play a central role in transcription regulation, DNA repair, DNA replication and chromosomal stability. DNA accessibility is regulated via a complex set of post-translational modifications of histones, also called histone code, and nucleosome remodeling. This is Histone H4.2 (hhfB) from Emericella nidulans (strain FGSC A4 / ATCC 38163 / CBS 112.46 / NRRL 194 / M139) (Aspergillus nidulans).